Here is a 246-residue protein sequence, read N- to C-terminus: tRNA pseudouridine synthase A (246 aa).

The Nucleophile role is filled by aspartate 52. Tyrosine 111 lines the substrate pocket.

It belongs to the tRNA pseudouridine synthase TruA family. In terms of assembly, homodimer.

The catalysed reaction is uridine(38/39/40) in tRNA = pseudouridine(38/39/40) in tRNA. Functionally, formation of pseudouridine at positions 38, 39 and 40 in the anticodon stem and loop of transfer RNAs. The protein is tRNA pseudouridine synthase A of Borreliella burgdorferi (strain ZS7) (Borrelia burgdorferi).